Reading from the N-terminus, the 190-residue chain is NADH-quinone oxidoreductase subunit B (190 aa).

Residues C69, C70, C134, and C164 each contribute to the [4Fe-4S] cluster site.

It belongs to the complex I 20 kDa subunit family. NDH-1 is composed of 14 different subunits. Subunits NuoB, C, D, E, F, and G constitute the peripheral sector of the complex. The cofactor is [4Fe-4S] cluster.

Its subcellular location is the cell inner membrane. The catalysed reaction is a quinone + NADH + 5 H(+)(in) = a quinol + NAD(+) + 4 H(+)(out). Its function is as follows. NDH-1 shuttles electrons from NADH, via FMN and iron-sulfur (Fe-S) centers, to quinones in the respiratory chain. Couples the redox reaction to proton translocation (for every two electrons transferred, four hydrogen ions are translocated across the cytoplasmic membrane), and thus conserves the redox energy in a proton gradient. The protein is NADH-quinone oxidoreductase subunit B of Hyphomonas neptunium (strain ATCC 15444).